The following is a 221-amino-acid chain: Ribonuclease 3 (221 aa).

The RNase III domain occupies 1–123; it reads MERTGHAFAD…LIAVLYLDGG (123 aa). Residue Glu36 participates in Mg(2+) binding. Residue Asp40 is part of the active site. Mg(2+) contacts are provided by Asp109 and Glu112. Glu112 is an active-site residue. The region spanning 148–217 is the DRBM domain; the sequence is DAKTELQEWA…AAALLLREGV (70 aa).

It belongs to the ribonuclease III family. Homodimer. Requires Mg(2+) as cofactor.

It is found in the cytoplasm. The catalysed reaction is Endonucleolytic cleavage to 5'-phosphomonoester.. Digests double-stranded RNA. Involved in the processing of primary rRNA transcript to yield the immediate precursors to the large and small rRNAs (23S and 16S). Processes some mRNAs, and tRNAs when they are encoded in the rRNA operon. Processes pre-crRNA and tracrRNA of type II CRISPR loci if present in the organism. In Mesorhizobium japonicum (strain LMG 29417 / CECT 9101 / MAFF 303099) (Mesorhizobium loti (strain MAFF 303099)), this protein is Ribonuclease 3.